The primary structure comprises 368 residues: o-succinylbenzoate synthase (368 aa).

K183 serves as the catalytic Proton donor. The Mg(2+) site is built by D213, E239, and D264. The Proton acceptor role is filled by K290.

It belongs to the mandelate racemase/muconate lactonizing enzyme family. MenC type 1 subfamily. Monomer. A divalent metal cation serves as cofactor.

The enzyme catalyses (1R,6R)-6-hydroxy-2-succinyl-cyclohexa-2,4-diene-1-carboxylate = 2-succinylbenzoate + H2O. The protein operates within quinol/quinone metabolism; 1,4-dihydroxy-2-naphthoate biosynthesis; 1,4-dihydroxy-2-naphthoate from chorismate: step 4/7. Its pathway is cofactor biosynthesis; phylloquinone biosynthesis. Functionally, converts 2-succinyl-6-hydroxy-2,4-cyclohexadiene-1-carboxylate (SHCHC) to 2-succinylbenzoate (OSB). Does not show N-succinylamino acid racemase (NSAR) activity with N-succinyl-L-phenylglycine as substrate. This Desulfotalea psychrophila (strain LSv54 / DSM 12343) protein is o-succinylbenzoate synthase.